The following is a 521-amino-acid chain: Beta-glucosidase 6 (521 aa).

The first 38 residues, 1-38 (MGRIKSSSGRCSTARLEAVAVLVVVFGVASSSLRGCIA), serve as a signal peptide directing secretion. A beta-D-glucoside is bound by residues Q64, H165, and 210 to 211 (NE). Catalysis depends on E211, which acts as the Proton donor. C230 and C238 are disulfide-bonded. N-linked (GlcNAc...) asparagine glycosylation is present at N291. Residue Y354 coordinates a beta-D-glucoside. N-linked (GlcNAc...) asparagine glycans are attached at residues N362 and N372. Residues E427, W477, 484 to 485 (EW), and F493 each bind a beta-D-glucoside. E427 serves as the catalytic Nucleophile.

This sequence belongs to the glycosyl hydrolase 1 family. As to quaternary structure, homodimer.

The protein resides in the secreted. It carries out the reaction Hydrolysis of terminal, non-reducing beta-D-glucosyl residues with release of beta-D-glucose.. Hydrolyzes glycosides, oligosaccharides and hydrophobic glycosides. Possesses gibberellin ester beta-D-glucosidase activity. Can hydrolyze gibberellin A4 beta-D-glucosyl ester in vitro. This chain is Beta-glucosidase 6, found in Oryza sativa subsp. japonica (Rice).